We begin with the raw amino-acid sequence, 596 residues long: UvrABC system protein C (596 aa).

Positions Gln14 to Val91 constitute a GIY-YIG domain. A UVR domain is found at Lys196–Thr231.

This sequence belongs to the UvrC family. Interacts with UvrB in an incision complex.

The protein localises to the cytoplasm. In terms of biological role, the UvrABC repair system catalyzes the recognition and processing of DNA lesions. UvrC both incises the 5' and 3' sides of the lesion. The N-terminal half is responsible for the 3' incision and the C-terminal half is responsible for the 5' incision. The polypeptide is UvrABC system protein C (Oceanobacillus iheyensis (strain DSM 14371 / CIP 107618 / JCM 11309 / KCTC 3954 / HTE831)).